We begin with the raw amino-acid sequence, 505 residues long: MVLPRFYAASSRAALQAARRAVPFTGVRGYAAAASSQGKVRAVIGAIVDVQFEQGQLPAILNALEIDTPEGKLVLEVAQHLGENTVRTIAMDGTEGLVRGENVSDTGAPISVPVGRETLGRIINVIGEPIDERGPINSKMRKPIHADPPLFVEQSTAAEVLETGIKVVDLLAPYARGGKIGLFGGAGVGKTVFIQELINNIAKAHGGFSVFTGVGERTREGNDLYREMKETGVINLEGDSKVALVFGQMNEPPGARARVALTGLTIAEYFRDEEGQDVLLFIDNIFRFTQAGSEVSALLGRIPSAVGYQPTLATDMGLLQERITTTKKGSVTSVQAVYVPADDLTDPAPATTFAHLDATTVLSRGISELGIYPAVDPLDSKSRLLDAAVVGQEHYDVATQVQQTLQAYKSLQDIIAILGMDELSEQDKLTVERARKIQRFLSQPFAVAEVFTGIPGRLVRLKDTISSFKAVLDGKYDHLPENAFYMVGGIEDVVAKAEKLAAEAN.

184–191 (GGAGVGKT) lines the ATP pocket.

The protein belongs to the ATPase alpha/beta chains family. In terms of assembly, F-type ATPases have 2 components, CF(1) - the catalytic core - and CF(0) - the membrane proton channel. CF(1) has five subunits: alpha(3), beta(3), gamma(1), delta(1), epsilon(1). CF(0) has three main subunits: a, b and c.

It is found in the mitochondrion. The protein resides in the mitochondrion inner membrane. It carries out the reaction ATP + H2O + 4 H(+)(in) = ADP + phosphate + 5 H(+)(out). Functionally, mitochondrial membrane ATP synthase (F(1)F(0) ATP synthase or Complex V) produces ATP from ADP in the presence of a proton gradient across the membrane which is generated by electron transport complexes of the respiratory chain. F-type ATPases consist of two structural domains, F(1) - containing the extramembraneous catalytic core, and F(0) - containing the membrane proton channel, linked together by a central stalk and a peripheral stalk. During catalysis, ATP synthesis in the catalytic domain of F(1) is coupled via a rotary mechanism of the central stalk subunits to proton translocation. Subunits alpha and beta form the catalytic core in F(1). Rotation of the central stalk against the surrounding alpha(3)beta(3) subunits leads to hydrolysis of ATP in three separate catalytic sites on the beta subunits. This is ATP synthase subunit beta, mitochondrial (ATP2) from Kluyveromyces lactis (strain ATCC 8585 / CBS 2359 / DSM 70799 / NBRC 1267 / NRRL Y-1140 / WM37) (Yeast).